The chain runs to 250 residues: Exotoxin type A (250 aa).

The first 30 residues, 1-30 (MENNKEVLKKMVFFVLMKFLGLTILPKGIC), serve as a signal peptide directing secretion. A disulfide bridge links Cys117 with Cys128.

The protein belongs to the staphylococcal/streptococcal toxin family.

Functionally, causative agent of the symptoms associated with scarlet fever, have been associated with streptococcal toxic shock-like disease and may play a role in the early events of rheumatic fever. The sequence is that of Exotoxin type A (speA) from Streptococcus pyogenes.